A 128-amino-acid polypeptide reads, in one-letter code: Small ribosomal subunit protein uS9 (128 aa).

Belongs to the universal ribosomal protein uS9 family.

The polypeptide is Small ribosomal subunit protein uS9 (Christiangramia forsetii (strain DSM 17595 / CGMCC 1.15422 / KT0803) (Gramella forsetii)).